Reading from the N-terminus, the 210-residue chain is Orotate phosphoribosyltransferase (210 aa).

5-phospho-alpha-D-ribose 1-diphosphate is bound by residues Arg-97, Lys-101, His-103, and 123 to 131 (EDLISTGGS). Ser-127 provides a ligand contact to orotate.

This sequence belongs to the purine/pyrimidine phosphoribosyltransferase family. PyrE subfamily. Homodimer. Mg(2+) serves as cofactor.

The catalysed reaction is orotidine 5'-phosphate + diphosphate = orotate + 5-phospho-alpha-D-ribose 1-diphosphate. The protein operates within pyrimidine metabolism; UMP biosynthesis via de novo pathway; UMP from orotate: step 1/2. Functionally, catalyzes the transfer of a ribosyl phosphate group from 5-phosphoribose 1-diphosphate to orotate, leading to the formation of orotidine monophosphate (OMP). The protein is Orotate phosphoribosyltransferase of Porphyromonas gingivalis (strain ATCC BAA-308 / W83).